Here is a 133-residue protein sequence, read N- to C-terminus: Holo-[acyl-carrier-protein] synthase (133 aa).

Residues aspartate 8 and glutamate 64 each contribute to the Mg(2+) site.

The protein belongs to the P-Pant transferase superfamily. AcpS family. It depends on Mg(2+) as a cofactor.

It is found in the cytoplasm. It carries out the reaction apo-[ACP] + CoA = holo-[ACP] + adenosine 3',5'-bisphosphate + H(+). Functionally, transfers the 4'-phosphopantetheine moiety from coenzyme A to a Ser of acyl-carrier-protein. In Shewanella loihica (strain ATCC BAA-1088 / PV-4), this protein is Holo-[acyl-carrier-protein] synthase.